The primary structure comprises 136 residues: Ribonuclease VapC47 (136 aa).

The PINc domain occupies 2 to 104; that stretch reads IYMDTSALTK…AIHLAAAAQI (103 aa). Mg(2+) contacts are provided by aspartate 5 and aspartate 94.

The protein belongs to the PINc/VapC protein family. The cofactor is Mg(2+).

Functionally, toxic component of a type II toxin-antitoxin (TA) system. An RNase. Its toxic effect on colony formation is neutralized by coexpression with cognate antitoxin VapB47. This is Ribonuclease VapC47 from Mycobacterium tuberculosis (strain CDC 1551 / Oshkosh).